The chain runs to 294 residues: Probable endonuclease 4 (294 aa).

Zn(2+) contacts are provided by histidine 71, histidine 111, glutamate 148, aspartate 182, histidine 185, histidine 217, aspartate 230, histidine 232, and glutamate 262.

Belongs to the AP endonuclease 2 family. It depends on Zn(2+) as a cofactor.

The catalysed reaction is Endonucleolytic cleavage to 5'-phosphooligonucleotide end-products.. Its function is as follows. Endonuclease IV plays a role in DNA repair. It cleaves phosphodiester bonds at apurinic or apyrimidinic (AP) sites, generating a 3'-hydroxyl group and a 5'-terminal sugar phosphate. This chain is Probable endonuclease 4, found in Acholeplasma laidlawii (strain PG-8A).